The primary structure comprises 544 residues: Chaperonin GroEL (544 aa).

ATP is bound by residues 29 to 32 (TLGP), 86 to 90 (DGTTT), G413, 476 to 478 (NAA), and D492.

This sequence belongs to the chaperonin (HSP60) family. Forms a cylinder of 14 subunits composed of two heptameric rings stacked back-to-back. Interacts with the co-chaperonin GroES.

It localises to the cytoplasm. The enzyme catalyses ATP + H2O + a folded polypeptide = ADP + phosphate + an unfolded polypeptide.. Its function is as follows. Together with its co-chaperonin GroES, plays an essential role in assisting protein folding. The GroEL-GroES system forms a nano-cage that allows encapsulation of the non-native substrate proteins and provides a physical environment optimized to promote and accelerate protein folding. This Bacillus mycoides (strain KBAB4) (Bacillus weihenstephanensis) protein is Chaperonin GroEL.